A 570-amino-acid chain; its full sequence is Probable diguanylate cyclase DgcQ (570 aa).

The next 2 helical transmembrane spans lie at 20–40 and 360–380; these read FGPG…STLL and IALT…WGVI. Residues 428 to 563 form the GGDEF domain; sequence QPFSVIQLDL…GRNRICASDA (136 aa). Asp-436 serves as a coordination point for Mg(2+). Substrate is bound by residues Asn-444, His-449, and Asp-453. Glu-479 contacts Mg(2+). Glu-479 (proton acceptor) is an active-site residue.

As to quaternary structure, homodimer. Mg(2+) is required as a cofactor.

It is found in the cell inner membrane. The enzyme catalyses 2 GTP = 3',3'-c-di-GMP + 2 diphosphate. Its pathway is glycan metabolism; bacterial cellulose biosynthesis. The protein operates within purine metabolism; 3',5'-cyclic di-GMP biosynthesis. Functionally, catalyzes the synthesis of cyclic-di-GMP (c-di-GMP) via the condensation of 2 GTP molecules. Cyclic-di-GMP is a second messenger which controls cell surface-associated traits in bacteria. Involved in the regulation of cellulose production. The sequence is that of Probable diguanylate cyclase DgcQ from Salmonella choleraesuis (strain SC-B67).